A 592-amino-acid chain; its full sequence is Aspartate--tRNA(Asp/Asn) ligase (592 aa).

Glu-172 contacts L-aspartate. The interval 196-199 (QLFK) is aspartate. Residue Arg-218 participates in L-aspartate binding. ATP-binding positions include 218–220 (RDE) and Gln-227. Residue His-450 participates in L-aspartate binding. Glu-484 contributes to the ATP binding site. Arg-491 is an L-aspartate binding site. 536-539 (GLDR) contacts ATP.

The protein belongs to the class-II aminoacyl-tRNA synthetase family. Type 1 subfamily. Homodimer.

It localises to the cytoplasm. It carries out the reaction tRNA(Asx) + L-aspartate + ATP = L-aspartyl-tRNA(Asx) + AMP + diphosphate. Functionally, aspartyl-tRNA synthetase with relaxed tRNA specificity since it is able to aspartylate not only its cognate tRNA(Asp) but also tRNA(Asn). Reaction proceeds in two steps: L-aspartate is first activated by ATP to form Asp-AMP and then transferred to the acceptor end of tRNA(Asp/Asn). This is Aspartate--tRNA(Asp/Asn) ligase from Thioalkalivibrio sulfidiphilus (strain HL-EbGR7).